The primary structure comprises 212 residues: Cytidylate kinase (212 aa).

9–17 (GPAAAGKGT) contributes to the ATP binding site.

It belongs to the cytidylate kinase family. Type 1 subfamily.

The protein localises to the cytoplasm. The enzyme catalyses CMP + ATP = CDP + ADP. The catalysed reaction is dCMP + ATP = dCDP + ADP. This chain is Cytidylate kinase, found in Sinorhizobium medicae (strain WSM419) (Ensifer medicae).